The primary structure comprises 251 residues: Flap endonuclease Xni (251 aa).

Asp104 lines the Mg(2+) pocket. A 5'-3' exonuclease domain is found at 160–250; it reads VQPQQLPDYW…DGNLQQLRLK (91 aa). 5 residues coordinate K(+): Leu171, Ala172, Pro180, Val182, and Ile185. The segment at 184 to 189 is interaction with DNA; the sequence is GIGPKS.

The protein belongs to the Xni family. Requires Mg(2+) as cofactor. K(+) is required as a cofactor.

In terms of biological role, has flap endonuclease activity. During DNA replication, flap endonucleases cleave the 5'-overhanging flap structure that is generated by displacement synthesis when DNA polymerase encounters the 5'-end of a downstream Okazaki fragment. The chain is Flap endonuclease Xni from Escherichia fergusonii (strain ATCC 35469 / DSM 13698 / CCUG 18766 / IAM 14443 / JCM 21226 / LMG 7866 / NBRC 102419 / NCTC 12128 / CDC 0568-73).